The primary structure comprises 281 residues: Glycerol uptake facilitator protein (281 aa).

Residues 1–5 (MSQTS) are Cytoplasmic-facing. A helical membrane pass occupies residues 6-34 (TLKGQCIAEFLGTGLLIFFGVGCVAALKV). Residues 35–39 (AGASF) are Periplasmic-facing. A helical transmembrane segment spans residues 40–60 (GQWEISVIWGLGVAMAIYLTA). At 61–63 (GVS) the chain is on the cytoplasmic side. Residues 64 to 67 (GAHL) lie within the membrane without spanning it. The NPA 1 motif lies at 68 to 70 (NPA). Residues 68–78 (NPAVTIALWLF) constitute an intramembrane region (helical). Residues 79-84 (ACFDKR) are Cytoplasmic-facing. A helical transmembrane segment spans residues 85 to 108 (KVIPFIVSQVAGAFCAAALVYGLY). At 109–143 (YNLFFDFEQTHHIVRGSVESVDLAGTFSTYPNPHI) the chain is on the periplasmic side. The chain crosses the membrane as a helical span at residues 144–169 (NFVQAFAVEMVITAILMGLILALTDD). The Cytoplasmic portion of the chain corresponds to 170–177 (GNGVPRGP). Residues 178–194 (LAPLLIGLLIAVIGASM) form a helical membrane-spanning segment. Residues 195-198 (GPLT) are Periplasmic-facing. The stretch at 199 to 202 (GFAM) is an intramembrane region. An NPA 2 motif is present at residues 203 to 205 (NPA). The helical intramembrane region spans 203–216 (NPARDFGPKVFAWL). The Periplasmic segment spans residues 217 to 231 (AGWGNVAFTGGRDIP). The chain crosses the membrane as a helical span at residues 232-254 (YFLVPLFGPIVGAIVGAFAYRKL). The Cytoplasmic portion of the chain corresponds to 255–281 (IGRHLPCDICVVEEKETTTPSEQKASL).

The protein belongs to the MIP/aquaporin (TC 1.A.8) family. In terms of assembly, homotetramer.

It is found in the cell inner membrane. The enzyme catalyses glycerol(in) = glycerol(out). In terms of biological role, mediates glycerol diffusion across the cytoplasmic membrane via a pore-type mechanism. This is Glycerol uptake facilitator protein (glpF) from Escherichia coli O157:H7.